The chain runs to 327 residues: GMP reductase (327 aa).

Cys-176 acts as the Thioimidate intermediate in catalysis. 205–228 (IIADGGIRTHGDIAKSIRFGASMV) is an NADP(+) binding site.

Belongs to the IMPDH/GMPR family. GuaC type 2 subfamily.

It catalyses the reaction IMP + NH4(+) + NADP(+) = GMP + NADPH + 2 H(+). Its function is as follows. Catalyzes the irreversible NADPH-dependent deamination of GMP to IMP. It functions in the conversion of nucleobase, nucleoside and nucleotide derivatives of G to A nucleotides, and in maintaining the intracellular balance of A and G nucleotides. In Streptococcus pyogenes serotype M5 (strain Manfredo), this protein is GMP reductase.